Consider the following 174-residue polypeptide: Shikimate kinase (174 aa).

Position 14–19 (Gly-14–Thr-19) interacts with ATP. Mg(2+) is bound at residue Ser-18. Positions 36, 60, and 82 each coordinate substrate. Residue Arg-120 participates in ATP binding. Position 141 (Arg-141) interacts with substrate. Arg-158 is an ATP binding site.

Belongs to the shikimate kinase family. In terms of assembly, monomer. Requires Mg(2+) as cofactor.

Its subcellular location is the cytoplasm. The enzyme catalyses shikimate + ATP = 3-phosphoshikimate + ADP + H(+). The protein operates within metabolic intermediate biosynthesis; chorismate biosynthesis; chorismate from D-erythrose 4-phosphate and phosphoenolpyruvate: step 5/7. In terms of biological role, catalyzes the specific phosphorylation of the 3-hydroxyl group of shikimic acid using ATP as a cosubstrate. This chain is Shikimate kinase, found in Buchnera aphidicola subsp. Baizongia pistaciae (strain Bp).